A 540-amino-acid chain; its full sequence is E3 ubiquitin-protein ligase rnf8-A (540 aa).

The 55-residue stretch at 30–84 folds into the FHA domain; sequence VTLGRGLGVTYQLKPTLCPLMISRTHCLFKQNTGGEWTVTDNKSLNGVWRNKERL. Residues 128–205 are disordered; the sequence is LIRPLPDKTK…SGTESRLNDS (78 aa). Polar residues-rich tracts occupy residues 152–162 and 179–200; these read ASGNEGPSNFS and SSHTTDLYKQPTVEPTASGTES. Residues 382–420 form an RING-type zinc finger; the sequence is CIICSEHFIEAVTLNCAHSFCSYCIKSWKKRKEECPICR. The interval 517 to 540 is disordered; that stretch reads GTDELDSSDFESDDDEEEDSFLII. The segment covering 519–540 has biased composition (acidic residues); the sequence is DELDSSDFESDDDEEEDSFLII.

The protein belongs to the RNF8 family. As to quaternary structure, homodimer. Forms a E2-E3 ubiquitin ligase complex composed of the rnf8 homodimer and a E2 heterodimer of ube2n and ube2v2.

It localises to the nucleus. The enzyme catalyses S-ubiquitinyl-[E2 ubiquitin-conjugating enzyme]-L-cysteine + [acceptor protein]-L-lysine = [E2 ubiquitin-conjugating enzyme]-L-cysteine + N(6)-ubiquitinyl-[acceptor protein]-L-lysine.. The protein operates within protein modification; protein ubiquitination. Its function is as follows. E3 ubiquitin-protein ligase that plays a key role in DNA damage signaling via 2 distinct roles: by mediating the 'Lys-63'-linked ubiquitination of histones H2A and H2AX and promoting the recruitment of DNA repair proteins at double-strand breaks (DSBs) sites, and by catalyzing 'Lys-48'-linked ubiquitination to remove target proteins from DNA damage sites. Following DNA DSBs, it is recruited to the sites of damage by ATM-phosphorylated mdc1 and catalyzes the 'Lys-63'-linked ubiquitination of histones H2A and H2AX, thereby promoting the formation of tp53bp1 and brca1 ionizing radiation-induced foci (IRIF). H2A ubiquitination also mediates the ATM-dependent transcriptional silencing at regions flanking DSBs in cis, a mechanism to avoid collision between transcription and repair intermediates. Also catalyzes the formation of 'Lys-48'-linked polyubiquitin chains, leading to degradation of substrate proteins. In addition to its function in damage signaling, also plays a role in higher-order chromatin structure by mediating extensive chromatin decondensation. This chain is E3 ubiquitin-protein ligase rnf8-A, found in Xenopus laevis (African clawed frog).